Consider the following 223-residue polypeptide: Deoxyribose-phosphate aldolase (223 aa).

Aspartate 91 serves as the catalytic Proton donor/acceptor. Lysine 153 acts as the Schiff-base intermediate with acetaldehyde in catalysis. Lysine 182 functions as the Proton donor/acceptor in the catalytic mechanism.

Belongs to the DeoC/FbaB aldolase family. DeoC type 1 subfamily.

The protein resides in the cytoplasm. The catalysed reaction is 2-deoxy-D-ribose 5-phosphate = D-glyceraldehyde 3-phosphate + acetaldehyde. It functions in the pathway carbohydrate degradation; 2-deoxy-D-ribose 1-phosphate degradation; D-glyceraldehyde 3-phosphate and acetaldehyde from 2-deoxy-alpha-D-ribose 1-phosphate: step 2/2. Its function is as follows. Catalyzes a reversible aldol reaction between acetaldehyde and D-glyceraldehyde 3-phosphate to generate 2-deoxy-D-ribose 5-phosphate. The protein is Deoxyribose-phosphate aldolase of Yersinia pestis bv. Antiqua (strain Angola).